The primary structure comprises 325 residues: N-acetyl-gamma-glutamyl-phosphate reductase (325 aa).

The active site involves C131.

This sequence belongs to the NAGSA dehydrogenase family. Type 1 subfamily.

It localises to the cytoplasm. It carries out the reaction N-acetyl-L-glutamate 5-semialdehyde + phosphate + NADP(+) = N-acetyl-L-glutamyl 5-phosphate + NADPH + H(+). Its pathway is amino-acid biosynthesis; L-arginine biosynthesis; N(2)-acetyl-L-ornithine from L-glutamate: step 3/4. Functionally, catalyzes the NADPH-dependent reduction of N-acetyl-5-glutamyl phosphate to yield N-acetyl-L-glutamate 5-semialdehyde. The chain is N-acetyl-gamma-glutamyl-phosphate reductase from Methylobacterium sp. (strain 4-46).